A 147-amino-acid chain; its full sequence is Hemoglobin subunit beta (147 aa).

At Val-2 the chain carries N-acetylvaline. The Globin domain occupies 3–147 (HLSAEEKGHI…VATALAHKYH (145 aa)). Lys-60 is subject to N6-acetyllysine. His-64 contacts heme b. Lys-83 is modified (N6-acetyllysine). His-93 is a binding site for heme b. Cys-94 bears the S-nitrosocysteine mark. Lys-145 is modified (N6-acetyllysine).

Belongs to the globin family. As to quaternary structure, heterotetramer of two alpha chains and two beta chains. As to expression, red blood cells.

Functionally, involved in oxygen transport from the lung to the various peripheral tissues. The protein is Hemoglobin subunit beta (HBB) of Sminthopsis crassicaudata (Fat-tailed dunnart).